We begin with the raw amino-acid sequence, 452 residues long: GTPase Der (452 aa).

EngA-type G domains are found at residues 9-170 (KIIA…PEED) and 185-362 (LQIV…KTWN). GTP is bound by residues 15–22 (GRPNVGKS), 62–66 (DTPGF), 124–127 (NKCE), 191–198 (GRPNAGKS), 238–242 (DTAGL), and 303–306 (NKWD). The 86-residue stretch at 363-448 (KKITTSKLNE…PIRFNYIKTK (86 aa)) folds into the KH-like domain.

It belongs to the TRAFAC class TrmE-Era-EngA-EngB-Septin-like GTPase superfamily. EngA (Der) GTPase family. Associates with the 50S ribosomal subunit.

In terms of biological role, GTPase that plays an essential role in the late steps of ribosome biogenesis. The chain is GTPase Der from Rickettsia bellii (strain OSU 85-389).